We begin with the raw amino-acid sequence, 133 residues long: MKAIKAKSPHAALPVGARLVCADNTGARELQIIAVKGYKGVRRRLPNAGIGDMVVCSVKEGTPDMRKEVVNAVIVRQRKEYRRPDGTRVKFEDNAAVIVTPDGAPRGSEIRGPVAKEAAERWPRIGSIASIIV.

Belongs to the universal ribosomal protein uL14 family. As to quaternary structure, part of the 50S ribosomal subunit. Forms a cluster with proteins L3 and L24e, part of which may contact the 16S rRNA in 2 intersubunit bridges.

Its function is as follows. Binds to 23S rRNA. Forms part of two intersubunit bridges in the 70S ribosome. The protein is Large ribosomal subunit protein uL14 of Methanopyrus kandleri (strain AV19 / DSM 6324 / JCM 9639 / NBRC 100938).